Consider the following 430-residue polypeptide: Putative O-antigen transporter (430 aa).

12 helical membrane passes run 23-39 (IIIA…LISM), 45-61 (YAIF…CSAV), 96-112 (IAII…SGVI), 131-147 (LFFT…IGAI), 163-179 (LLNA…LLYI), 192-208 (LIVL…CYIV), 236-252 (LFTL…YMVI), 266-282 (VTMK…TAIL), 309-325 (ILLG…FIYL), 342-358 (VSIL…CIRV), 373-389 (LKIL…IGGI), and 400-416 (ISGV…LTVF).

Its subcellular location is the cell inner membrane. Its pathway is bacterial outer membrane biogenesis; LPS O-antigen biosynthesis. In terms of biological role, may be involved in the translocation process of the nascent O-polysaccharide molecules and/or its ligation to lipid A core units. This Salmonella typhimurium (strain LT2 / SGSC1412 / ATCC 700720) protein is Putative O-antigen transporter (rfbX).